Here is a 125-residue protein sequence, read N- to C-terminus: Small ribosomal subunit protein uS13 (125 aa).

Belongs to the universal ribosomal protein uS13 family. As to quaternary structure, part of the 30S ribosomal subunit. Forms a loose heterodimer with protein S19. Forms two bridges to the 50S subunit in the 70S ribosome.

Located at the top of the head of the 30S subunit, it contacts several helices of the 16S rRNA. In the 70S ribosome it contacts the 23S rRNA (bridge B1a) and protein L5 of the 50S subunit (bridge B1b), connecting the 2 subunits; these bridges are implicated in subunit movement. Contacts the tRNAs in the A and P-sites. The polypeptide is Small ribosomal subunit protein uS13 (Rickettsia typhi (strain ATCC VR-144 / Wilmington)).